A 332-amino-acid polypeptide reads, in one-letter code: Endonuclease 8-like 2 (332 aa).

Proline 2 serves as the catalytic Schiff-base intermediate with DNA. Glutamate 3 acts as the Proton donor in catalysis. Lysine 50 (proton donor; for beta-elimination activity) is an active-site residue. Position 50 is an N6-acetyllysine (lysine 50). Residues 56–121 (FDPDEEMGPP…EDDSEYLERD (66 aa)) are disordered. Serine 68 bears the Phosphoserine mark. Over residues 74–84 (PQKEAQKEGAA) the composition is skewed to basic and acidic residues. The segment covering 94–105 (GQKTPDGSSQSA) has biased composition (polar residues). The residue at position 154 (lysine 154) is an N6-acetyllysine. DNA is bound at residue asparagine 231. The segment at 284–320 (QVYQREQCPAGHQVMKEAFGPQDGLQRLTWWCPQCQP) adopts an FPG-type zinc-finger fold. Arginine 310 (proton donor; for delta-elimination activity) is an active-site residue.

It belongs to the FPG family. As to quaternary structure, binds EP300.

Its subcellular location is the nucleus. The enzyme catalyses 2'-deoxyribonucleotide-(2'-deoxyribose 5'-phosphate)-2'-deoxyribonucleotide-DNA = a 3'-end 2'-deoxyribonucleotide-(2,3-dehydro-2,3-deoxyribose 5'-phosphate)-DNA + a 5'-end 5'-phospho-2'-deoxyribonucleoside-DNA + H(+). With respect to regulation, acetylation of Lys-50 leads to loss of DNA nicking activity. Its function is as follows. Involved in base excision repair of DNA damaged by oxidation or by mutagenic agents. Has DNA glycosylase activity towards 5-hydroxyuracil and other oxidized derivatives of cytosine with a preference for mismatched double-stranded DNA (DNA bubbles). Has low or no DNA glycosylase activity towards thymine glycol, 2-hydroxyadenine, hypoxanthine and 8-oxoguanine. Has AP (apurinic/apyrimidinic) lyase activity and introduces nicks in the DNA strand. Cleaves the DNA backbone by beta-delta elimination to generate a single-strand break at the site of the removed base with both 3'- and 5'-phosphates. This is Endonuclease 8-like 2 (NEIL2) from Pongo abelii (Sumatran orangutan).